The primary structure comprises 276 residues: ATP synthase subunit a (276 aa).

7 helical membrane passes run 49–69, 109–129, 137–157, 173–193, 203–223, 232–252, and 253–273; these read KPML…FAAA, YLFT…IPFI, SGMV…AGIS, GIRG…NILV, FANM…GEYI, APVG…EMLI, and QFLQ…GAVA.

Belongs to the ATPase A chain family. In terms of assembly, F-type ATPases have 2 components, CF(1) - the catalytic core - and CF(0) - the membrane proton channel. CF(1) has five subunits: alpha(3), beta(3), gamma(1), delta(1), epsilon(1). CF(0) has three main subunits: a(1), b(2) and c(9-12). The alpha and beta chains form an alternating ring which encloses part of the gamma chain. CF(1) is attached to CF(0) by a central stalk formed by the gamma and epsilon chains, while a peripheral stalk is formed by the delta and b chains.

The protein resides in the cell membrane. Functionally, key component of the proton channel; it plays a direct role in the translocation of protons across the membrane. This Nocardioides sp. (strain ATCC BAA-499 / JS614) protein is ATP synthase subunit a.